We begin with the raw amino-acid sequence, 1075 residues long: DNA-directed RNA polymerase subunit beta (1075 aa).

It belongs to the RNA polymerase beta chain family. As to quaternary structure, in plastids the minimal PEP RNA polymerase catalytic core is composed of four subunits: alpha, beta, beta', and beta''. When a (nuclear-encoded) sigma factor is associated with the core the holoenzyme is formed, which can initiate transcription.

The protein resides in the plastid. Its subcellular location is the chloroplast. It carries out the reaction RNA(n) + a ribonucleoside 5'-triphosphate = RNA(n+1) + diphosphate. In terms of biological role, DNA-dependent RNA polymerase catalyzes the transcription of DNA into RNA using the four ribonucleoside triphosphates as substrates. The chain is DNA-directed RNA polymerase subunit beta from Oryza sativa (Rice).